A 120-amino-acid chain; its full sequence is Large ribosomal subunit protein uL18 (120 aa).

The protein belongs to the universal ribosomal protein uL18 family. Part of the 50S ribosomal subunit; part of the 5S rRNA/L5/L18/L25 subcomplex. Contacts the 5S and 23S rRNAs.

Functionally, this is one of the proteins that bind and probably mediate the attachment of the 5S RNA into the large ribosomal subunit, where it forms part of the central protuberance. The protein is Large ribosomal subunit protein uL18 of Bacillus cereus (strain G9842).